Consider the following 424-residue polypeptide: Endoglucanase 1 (424 aa).

The signal sequence occupies residues 1–18 (MAKFSALCSLALLGLATA). 9 disulfides stabilise this stretch: C35–C41, C68–C90, C80–C86, C156–C384, C188–C211, C192–C210, C231–C250, C239–C244, and C255–C331. A glycan (N-linked (GlcNAc...) asparagine) is linked at N76. The Nucleophile role is filled by E213. The active-site Proton donor is the E218. N271 and N385 each carry an N-linked (GlcNAc...) asparagine glycan.

Belongs to the glycosyl hydrolase 7 (cellulase C) family. In terms of assembly, monomer.

Its subcellular location is the secreted. It carries out the reaction Endohydrolysis of (1-&gt;4)-beta-D-glucosidic linkages in cellulose, lichenin and cereal beta-D-glucans.. In terms of biological role, endoglucanase that is involved in the biological conversion of cellulose to glucose. Hydrolyzes internal beta-1,4-glucosidic bonds. The chain is Endoglucanase 1 from Pyricularia oryzae (strain 70-15 / ATCC MYA-4617 / FGSC 8958) (Rice blast fungus).